The sequence spans 523 residues: GMP synthase [glutamine-hydrolyzing] (523 aa).

The 198-residue stretch at 8–205 folds into the Glutamine amidotransferase type-1 domain; that stretch reads KILILDFGSQ…VVNICGCETK (198 aa). Cysteine 85 serves as the catalytic Nucleophile. Catalysis depends on residues histidine 179 and glutamate 181. The GMPS ATP-PPase domain occupies 206 to 398; it reads WTAENIIEDA…LGLPAEMINR (193 aa). 233-239 contributes to the ATP binding site; the sequence is SGGVDSS.

Homodimer.

The catalysed reaction is XMP + L-glutamine + ATP + H2O = GMP + L-glutamate + AMP + diphosphate + 2 H(+). Its pathway is purine metabolism; GMP biosynthesis; GMP from XMP (L-Gln route): step 1/1. In terms of biological role, catalyzes the synthesis of GMP from XMP. This is GMP synthase [glutamine-hydrolyzing] from Haemophilus influenzae (strain PittEE).